Consider the following 321-residue polypeptide: L-lactate dehydrogenase (321 aa).

NAD(+) is bound by residues Val-19, Asp-40, Lys-45, Tyr-71, and 85–86; that span reads GA. Residues Gln-88, Arg-94, and 126 to 129 each bind substrate; that span reads NPVD. Residues 124–126 and Ser-149 contribute to the NAD(+) site; that span reads ATN. 154–157 serves as a coordination point for substrate; it reads DTAR. Beta-D-fructose 1,6-bisphosphate-binding residues include Arg-159 and His-174. His-181 acts as the Proton acceptor in catalysis. Tyr-226 carries the post-translational modification Phosphotyrosine. Thr-235 is a substrate binding site.

This sequence belongs to the LDH/MDH superfamily. LDH family. In terms of assembly, homotetramer.

The protein resides in the cytoplasm. The enzyme catalyses (S)-lactate + NAD(+) = pyruvate + NADH + H(+). The protein operates within fermentation; pyruvate fermentation to lactate; (S)-lactate from pyruvate: step 1/1. With respect to regulation, allosterically activated by fructose 1,6-bisphosphate (FBP). Functionally, catalyzes the conversion of lactate to pyruvate. The protein is L-lactate dehydrogenase of Oceanobacillus iheyensis (strain DSM 14371 / CIP 107618 / JCM 11309 / KCTC 3954 / HTE831).